Reading from the N-terminus, the 148-residue chain is Snaclec 8 (148 aa).

The N-terminal stretch at 1 to 23 is a signal peptide; sequence MGRFIFVSFSLLVVFFSLSGTEA. The 115-residue stretch at 34-148 folds into the C-type lectin domain; it reads YDQNCYKAFE…DTQFRLQEPG (115 aa).

The protein belongs to the snaclec family. In terms of assembly, heterodimer; disulfide-linked. Post-translationally, contains disulfide bonds. In terms of tissue distribution, expressed by the venom gland.

The protein resides in the secreted. Functionally, interferes with one step of hemostasis (modulation of platelet aggregation, or coagulation cascade, for example). In Echis carinatus sochureki (Saw-scaled viper), this protein is Snaclec 8.